Consider the following 479-residue polypeptide: Ribulose bisphosphate carboxylase large chain (479 aa).

Residues 1-2 constitute a propeptide that is removed on maturation; it reads MS. Substrate is bound by residues Asn-123 and Thr-173. Lys-175 serves as the catalytic Proton acceptor. Lys-177 is a substrate binding site. The Mg(2+) site is built by Lys-201, Asp-203, and Glu-204. Lys-201 is subject to N6-carboxylysine. A Phosphoserine modification is found at Ser-208. The active-site Proton acceptor is His-294. Residues Arg-295 and His-327 each coordinate substrate. Position 330 is a phosphothreonine (Thr-330). Ser-379 contacts substrate.

It belongs to the RuBisCO large chain family. Type I subfamily. In terms of assembly, heterohexadecamer of 8 large chains and 8 small chains; disulfide-linked. The disulfide link is formed within the large subunit homodimers. Mg(2+) is required as a cofactor. The disulfide bond which can form in the large chain dimeric partners within the hexadecamer appears to be associated with oxidative stress and protein turnover.

The protein resides in the plastid. The protein localises to the chloroplast. The catalysed reaction is 2 (2R)-3-phosphoglycerate + 2 H(+) = D-ribulose 1,5-bisphosphate + CO2 + H2O. It catalyses the reaction D-ribulose 1,5-bisphosphate + O2 = 2-phosphoglycolate + (2R)-3-phosphoglycerate + 2 H(+). Its function is as follows. RuBisCO catalyzes two reactions: the carboxylation of D-ribulose 1,5-bisphosphate, the primary event in carbon dioxide fixation, as well as the oxidative fragmentation of the pentose substrate in the photorespiration process. Both reactions occur simultaneously and in competition at the same active site. The protein is Ribulose bisphosphate carboxylase large chain of Brassica oleracea (Wild cabbage).